The sequence spans 227 residues: Triosephosphate isomerase (227 aa).

Position 9 to 11 (9 to 11 (NFK)) interacts with substrate. The Electrophile role is filled by His93. The active-site Proton acceptor is Glu141. Residues Ile146, Gly180, and 201–202 (AS) contribute to the substrate site.

The protein belongs to the triosephosphate isomerase family. As to quaternary structure, homotetramer; dimer of dimers.

The protein localises to the cytoplasm. The enzyme catalyses D-glyceraldehyde 3-phosphate = dihydroxyacetone phosphate. Its pathway is carbohydrate biosynthesis; gluconeogenesis. The protein operates within carbohydrate degradation; glycolysis; D-glyceraldehyde 3-phosphate from glycerone phosphate: step 1/1. Involved in the gluconeogenesis. Catalyzes stereospecifically the conversion of dihydroxyacetone phosphate (DHAP) to D-glyceraldehyde-3-phosphate (G3P). The polypeptide is Triosephosphate isomerase (Saccharolobus solfataricus (strain ATCC 35092 / DSM 1617 / JCM 11322 / P2) (Sulfolobus solfataricus)).